A 1058-amino-acid polypeptide reads, in one-letter code: SIT4-associating protein SAP185 (1058 aa).

Residue lysine 20 forms a Glycyl lysine isopeptide (Lys-Gly) (interchain with G-Cter in ubiquitin) linkage. Disordered regions lie at residues 34-71, 135-202, 513-556, 818-862, 873-892, and 934-992; these read TSTE…NREE, SEDR…ELEE, NSQN…TSID, CQEE…DQEQ, TKTR…VPGE, and ELSD…HDYD. Polar residues predominate over residues 42-55; it reads DSNSTDESLESNSF. Composition is skewed to basic and acidic residues over residues 135-146 and 153-175; these read SEDRDLVRGEDK and ENAK…TRSG. Residues 176-189 are compositionally biased toward acidic residues; it reads EEEELENEENDSAS. The segment covering 190 to 202 has biased composition (basic and acidic residues); it reads EDTRVTLPHELEE. Composition is skewed to acidic residues over residues 528-546 and 820-837; these read ENED…DDTN and EEEE…EDEP. Basic and acidic residues predominate over residues 838–861; sequence QEYRNGDSVRSKESNSSEGKRDQE. The span at 934–963 shows a compositional bias: polar residues; the sequence is ELSDGWESSPSNSIPKRASPSKNGMNSPMF. Residues 967 to 991 are compositionally biased toward basic and acidic residues; that stretch reads FELHSPTDEFGGHKDEILSAEGHDY.

It belongs to the SAPS family. Hyperphosphorylated in the absence of SIT4.

In terms of biological role, associates with the SIT4 phosphatase in a cell cycle dependent manner. May be directly or indirectly involved in SIT4-dependent functions in budding and in normal G1 cyclin expression. This Saccharomyces cerevisiae (strain ATCC 204508 / S288c) (Baker's yeast) protein is SIT4-associating protein SAP185 (SAP185).